The chain runs to 443 residues: Cyclic AMP receptor 4 (443 aa).

Over 1–11 (MKVLQEINLTY) the chain is Extracellular. Asn-8 carries N-linked (GlcNAc...) asparagine glycosylation. Residues 12–32 (SILVIADFSSIFGCLLVLIAF) traverse the membrane as a helical segment. Residues 33–44 (KKLKLLRNHITR) lie on the Cytoplasmic side of the membrane. Residues 45–65 (VIACFCVSSLLKDIISTGLTL) traverse the membrane as a helical segment. The Extracellular portion of the chain corresponds to 66 to 89 (SLGPQNEAGSTSFQCYLYAITITY). Residues 90-110 (GSLACWLWTLCLAFSIYNLIV) form a helical membrane-spanning segment. Residues 111–119 (KREPEPEKY) are Cytoplasmic-facing. The helical transmembrane segment at 120-140 (EKFYHGVCWTIPLICVIVMLA) threads the bilayer. Over 141–161 (KKTIEPVGNWCWISEKYVGYR) the chain is Extracellular. A helical membrane pass occupies residues 162–182 (FGLFYGPFFAIWIISAVLVGL). The Cytoplasmic portion of the chain corresponds to 183–208 (TSRYTYSVIRNSVSDNKDKHMTYQFK). Residues 209 to 229 (LINYIIVFLLCWVFAIVNRIL) form a helical membrane-spanning segment. Residues 230 to 263 (NGLGYYPTLPNILHTYFSVSHGFFASVTFIYNNP) lie on the Extracellular side of the membrane. A helical membrane pass occupies residues 264–284 (LMWRYWGSKIFLIFAKFGYFV). At 285-443 (ELQRRLDRNK…DEREKKDNKF (159 aa)) the chain is on the cytoplasmic side. Disordered regions lie at residues 325 to 354 (NDIS…QQSP) and 396 to 443 (SFEI…DNKF). The segment covering 332–352 (QQQQQQQQTPQQPQQQFQQQQ) has biased composition (low complexity). Residues 396–410 (SFEITQPSNDLNTIE) show a composition bias toward polar residues. A compositionally biased stretch (low complexity) spans 411–425 (NNNNYNNNNNNNNNN). Over residues 429–443 (IEKEKDEREKKDNKF) the composition is skewed to basic and acidic residues.

The protein belongs to the G-protein coupled receptor 5 family. In terms of processing, C-terminal Ser or Thr residues may be phosphorylated.

It is found in the membrane. Functionally, receptor for cAMP. Regulates axial patterning and cellular differentiation during late development. The activity of this receptor is mediated by G proteins. The sequence is that of Cyclic AMP receptor 4 (carD) from Dictyostelium discoideum (Social amoeba).